The sequence spans 416 residues: Multifunctional CCA protein (416 aa).

2 residues coordinate ATP: glycine 8 and arginine 11. Positions 8 and 11 each coordinate CTP. 2 residues coordinate Mg(2+): aspartate 21 and aspartate 23. 3 residues coordinate ATP: arginine 91, arginine 137, and arginine 140. Arginine 91, arginine 137, and arginine 140 together coordinate CTP. The region spanning 228 to 329 (TGLHTMMVLA…IKLFDKADFW (102 aa)) is the HD domain.

This sequence belongs to the tRNA nucleotidyltransferase/poly(A) polymerase family. Bacterial CCA-adding enzyme type 1 subfamily. As to quaternary structure, monomer. Can also form homodimers and oligomers. Mg(2+) is required as a cofactor. It depends on Ni(2+) as a cofactor.

The enzyme catalyses a tRNA precursor + 2 CTP + ATP = a tRNA with a 3' CCA end + 3 diphosphate. The catalysed reaction is a tRNA with a 3' CCA end + 2 CTP + ATP = a tRNA with a 3' CCACCA end + 3 diphosphate. Catalyzes the addition and repair of the essential 3'-terminal CCA sequence in tRNAs without using a nucleic acid template. Adds these three nucleotides in the order of C, C, and A to the tRNA nucleotide-73, using CTP and ATP as substrates and producing inorganic pyrophosphate. tRNA 3'-terminal CCA addition is required both for tRNA processing and repair. Also involved in tRNA surveillance by mediating tandem CCA addition to generate a CCACCA at the 3' terminus of unstable tRNAs. While stable tRNAs receive only 3'-terminal CCA, unstable tRNAs are marked with CCACCA and rapidly degraded. The sequence is that of Multifunctional CCA protein from Shewanella sp. (strain MR-7).